Consider the following 166-residue polypeptide: NAD(P)H-quinone oxidoreductase subunit I, chloroplastic (166 aa).

2 4Fe-4S ferredoxin-type domains span residues 55–84 and 95–124; these read GRIH…VDWK and LNYS…MTEE. Residues cysteine 64, cysteine 67, cysteine 70, cysteine 74, cysteine 104, cysteine 107, cysteine 110, and cysteine 114 each coordinate [4Fe-4S] cluster.

This sequence belongs to the complex I 23 kDa subunit family. NDH is composed of at least 16 different subunits, 5 of which are encoded in the nucleus. [4Fe-4S] cluster is required as a cofactor.

It is found in the plastid. The protein localises to the chloroplast thylakoid membrane. The enzyme catalyses a plastoquinone + NADH + (n+1) H(+)(in) = a plastoquinol + NAD(+) + n H(+)(out). The catalysed reaction is a plastoquinone + NADPH + (n+1) H(+)(in) = a plastoquinol + NADP(+) + n H(+)(out). NDH shuttles electrons from NAD(P)H:plastoquinone, via FMN and iron-sulfur (Fe-S) centers, to quinones in the photosynthetic chain and possibly in a chloroplast respiratory chain. The immediate electron acceptor for the enzyme in this species is believed to be plastoquinone. Couples the redox reaction to proton translocation, and thus conserves the redox energy in a proton gradient. In Polymnia canadensis (White-flowered leaf-cup), this protein is NAD(P)H-quinone oxidoreductase subunit I, chloroplastic.